Reading from the N-terminus, the 309-residue chain is NAD-dependent protein deacylase sirtuin-5, mitochondrial (309 aa).

The N-terminal 35 residues, 1 to 35 (MILLPFHTRRLVSHVYCGLKPASKKKGIALEMARP), are a transit peptide targeting the mitochondrion. The 271-residue stretch at 36 to 306 (SSNLADFREA…PPAIARHETE (271 aa)) folds into the Deacetylase sirtuin-type domain. 57 to 76 (GAGVSAESGVPTFRGAGGYW) provides a ligand contact to NAD(+). Substrate is bound by residues Tyr-101 and Arg-104. 139 to 142 (QNID) lines the NAD(+) pocket. The Proton acceptor role is filled by His-157. Positions 165, 168, 206, and 211 each coordinate Zn(2+). NAD(+) contacts are provided by residues 248–250 (GTS), 274–276 (NME), and Cys-292.

The protein belongs to the sirtuin family. Class III subfamily. Zn(2+) serves as cofactor.

It localises to the mitochondrion. The protein localises to the cytoplasm. It is found in the cytosol. The protein resides in the nucleus. It catalyses the reaction N(6)-malonyl-L-lysyl-[protein] + NAD(+) + H2O = 2''-O-malonyl-ADP-D-ribose + nicotinamide + L-lysyl-[protein]. It carries out the reaction N(6)-succinyl-L-lysyl-[protein] + NAD(+) + H2O = 2''-O-succinyl-ADP-D-ribose + nicotinamide + L-lysyl-[protein]. The enzyme catalyses N(6)-glutaryl-L-lysyl-[protein] + NAD(+) + H2O = 2''-O-glutaryl-ADP-D-ribose + nicotinamide + L-lysyl-[protein]. NAD-dependent lysine demalonylase, desuccinylase and deglutarylase that specifically removes malonyl, succinyl and glutaryl groups on target proteins. Has weak NAD-dependent protein deacetylase activity; however this activity may not be physiologically relevant in vivo. This is NAD-dependent protein deacylase sirtuin-5, mitochondrial (sirt5) from Xenopus tropicalis (Western clawed frog).